We begin with the raw amino-acid sequence, 149 residues long: Large ribosomal subunit protein eL19 (149 aa).

The disordered stretch occupies residues 67–90; that stretch reads KRKLQKRKGRRRGHGSRKGAKGAR.

This sequence belongs to the eukaryotic ribosomal protein eL19 family. As to quaternary structure, part of the 50S ribosomal subunit.

Its function is as follows. Binds to the 23S rRNA. This chain is Large ribosomal subunit protein eL19, found in Archaeoglobus fulgidus (strain ATCC 49558 / DSM 4304 / JCM 9628 / NBRC 100126 / VC-16).